Reading from the N-terminus, the 360-residue chain is UDP-N-acetylglucosamine--N-acetylmuramyl-(pentapeptide) pyrophosphoryl-undecaprenol N-acetylglucosamine transferase (360 aa).

UDP-N-acetyl-alpha-D-glucosamine is bound by residues 15-17 (TGG), Asn127, Arg163, Ser191, Ile249, 268-273 (ALTVSE), and Gln293.

Belongs to the glycosyltransferase 28 family. MurG subfamily.

It localises to the cell inner membrane. The catalysed reaction is di-trans,octa-cis-undecaprenyl diphospho-N-acetyl-alpha-D-muramoyl-L-alanyl-D-glutamyl-meso-2,6-diaminopimeloyl-D-alanyl-D-alanine + UDP-N-acetyl-alpha-D-glucosamine = di-trans,octa-cis-undecaprenyl diphospho-[N-acetyl-alpha-D-glucosaminyl-(1-&gt;4)]-N-acetyl-alpha-D-muramoyl-L-alanyl-D-glutamyl-meso-2,6-diaminopimeloyl-D-alanyl-D-alanine + UDP + H(+). Its pathway is cell wall biogenesis; peptidoglycan biosynthesis. Cell wall formation. Catalyzes the transfer of a GlcNAc subunit on undecaprenyl-pyrophosphoryl-MurNAc-pentapeptide (lipid intermediate I) to form undecaprenyl-pyrophosphoryl-MurNAc-(pentapeptide)GlcNAc (lipid intermediate II). The protein is UDP-N-acetylglucosamine--N-acetylmuramyl-(pentapeptide) pyrophosphoryl-undecaprenol N-acetylglucosamine transferase of Proteus mirabilis (strain HI4320).